The chain runs to 154 residues: Small ribosomal subunit protein uS9 (154 aa).

2 disordered regions span residues 1-33 and 115-154; these read MVPP…SGLG and PENN…YSKR. Residues 135-154 show a composition bias toward basic residues; the sequence is KERKKAGLKKARKAPQYSKR.

The protein belongs to the universal ribosomal protein uS9 family.

This Tropheryma whipplei (strain TW08/27) (Whipple's bacillus) protein is Small ribosomal subunit protein uS9.